The chain runs to 192 residues: Riboflavin kinase (192 aa).

Mg(2+) is bound by residues threonine 47 and asparagine 49. Glutamate 129 functions as the Nucleophile in the catalytic mechanism.

This sequence belongs to the flavokinase family. The cofactor is Zn(2+). Mg(2+) serves as cofactor.

The enzyme catalyses riboflavin + ATP = FMN + ADP + H(+). It functions in the pathway cofactor biosynthesis; FMN biosynthesis; FMN from riboflavin (ATP route): step 1/1. Functionally, catalyzes the phosphorylation of riboflavin (vitamin B2) to form flavin mononucleotide (FMN) coenzyme. The sequence is that of Riboflavin kinase (FMN1) from Yarrowia lipolytica (strain CLIB 122 / E 150) (Yeast).